An 80-amino-acid chain; its full sequence is MAKFASIIALLFAALVLFAAFEAPTMVEAQKLCERPSGTWSGVCGNNNACKNQCINLEKARHGSCNYVFPAHKCICYFPC.

An N-terminal signal peptide occupies residues 1–29 (MAKFASIIALLFAALVLFAAFEAPTMVEA). Residue Q30 is modified to Pyrrolidone carboxylic acid. 4 disulfide bridges follow: C33/C80, C44/C65, C50/C74, and C54/C76.

It belongs to the DEFL family. Forms oligomers in its native state.

It is found in the secreted. Possesses antifungal activity sensitive to inorganic cations. This is Defensin-like protein 1 (AFP1) from Raphanus sativus (Radish).